A 177-amino-acid chain; its full sequence is O-acetyl-ADP-ribose deacetylase (177 aa).

A Macro domain is found at 1–175 (MNSRIHVIHG…LYQRLLTQQG (175 aa)). Substrate contacts are provided by residues 11 to 12 (DI), Asn-25, 33 to 35 (GVD), and 122 to 126 (STGVY). Residue Asp-35 is the Proton acceptor of the active site.

Belongs to the MacroD-type family. YmdB subfamily. As to quaternary structure, homodimer. Interacts with RNase III.

The enzyme catalyses 3''-O-acetyl-ADP-D-ribose + H2O = ADP-D-ribose + acetate + H(+). It catalyses the reaction 2''-O-acetyl-ADP-D-ribose + H2O = ADP-D-ribose + acetate + H(+). Deacetylates O-acetyl-ADP ribose to yield ADP-ribose and free acetate. Down-regulates ribonuclease 3 (RNase III) activity. Acts by interacting directly with the region of the ribonuclease that is required for dimerization/activation. This chain is O-acetyl-ADP-ribose deacetylase, found in Citrobacter rodentium (strain ICC168) (Citrobacter freundii biotype 4280).